The following is a 40-amino-acid chain: Acyl-CoA-binding protein 2 (40 aa).

Positions alanine 1–threonine 15 are enriched in basic and acidic residues. The disordered stretch occupies residues alanine 1 to lysine 25. In terms of domain architecture, ACB spans leucine 2–valine 40.

This sequence belongs to the ACBP family.

It localises to the cytoplasm. Its function is as follows. Binds medium- and long-chain acyl-CoA esters with very high affinity and may function as an intracellular carrier of acyl-CoA esters. This chain is Acyl-CoA-binding protein 2, found in Digitalis lanata (Grecian foxglove).